A 745-amino-acid polypeptide reads, in one-letter code: MSVLEECCYLPVVSAQQLPEPSDEGYLEDQLEIFGILALNKKLTRAECCLTQLDTLMAPELTFYTCRAARRLLLGLVHVPCVSVGYMPPGMCLHKGSSFSGAGLVFNGYQYYTTNQLTTDTFIPGIRSMEETDPVLDKNFTWRIIYFPKLLTTRVSWTLMFQIISRYVNMYELDECVSLFCNSLNPHLKQVCTYNYSLLTYHLKNPSLQRWPHSSKTVGKTSEEFLLINFLLHWPSSTCLAQLRAKVLKGVKQFPGILQYLSALPVSKAVTVQGLEILKYIECIGLLFPQWAPVLLKRTPKKFTCVITVVNNHTNSSIWLQFPESGAMLRTALCMAVAKHICREKELISPGKQQLSLARALVANFEKMQYAPKDFPIILYPTEIYRPMPVDDQPASDIKNSFNALTHISINSFKVNVFNTNMVINTNITCLQAPCCYSQIVNVPKLVNNFVIKKYSVKEPAFTVSIFYSEDFNLKAAINVNISGDIINFLLAMNTLKCFLPVTDIFPASMANWNSTFDLHGLENQHLVRSGRRDVFWTTNFPSVVSSNEGYNVSWFKAATATVSKIHGSDLTKQVQGEIRRLIGHRHARISFCKNKLFATLESRNCAQIQAAHKRFLECLYECCSWFRANTNALTQLVQCGAFDFSKRIIAHSKSRHECALCGYKVCNSIPKVIINHKKTRLDDCGRNANFLSYLHRGAPHMINTKAKLFKHICRRASLRSYHFAGCAKAKEWSKALRLAHQMPS.

The protein belongs to the herpesviridae UL87 family.

This is an uncharacterized protein from Connochaetes taurinus (Blue wildebeest).